A 942-amino-acid polypeptide reads, in one-letter code: MSDSKYFQTTKKGEIHELKEELLSQREDKKKEAVKKVIAAMTVGKDVSMLFTHVLNCMQTHNLELKKLVYLYVMNYAKNHPDRAILAVNTFQKDASDPNPLIRALAVRTMGCIRVDNITEHLCEPLRHALKDQDPYVRKTAAVCVAKLYDVNPELVENQGFLNILNDLLGDSNPMVVANAVASLTEIDEVSKKEVFRIHSGNLNKLLAALNECTEWGQVFILNSLCKYTPRDSQEAENVCERVAPRLQHANSAVVLSAVKVLMKYMNSIGNNDVIRLFCKKMAPPLVTLLSKEPEIQFLGLRNINLIVQKRPEILQYEMKVFFCKYNDPIYVKMEKLEIMIMLANEKNIEEVLLEFKEYATEIDVEFVRKAVRAIGRCAIKIDRASERCIQVLLDLIQTKVNYVVQEAIIVIKDIFRKYPNKYEGIIATLCANLESLDEPEAKASMIWIIGEYAERIDNAHELLNSFLEGFKDENSQVQLQLLTSIVKLFLKRPKDAQQMVQTVLNLSTQESDNPDLRDRGFVYWRLLSTDFEAAKAVVLSEKPLITDTTSHLDESLLNELILNISTLASVYHKPPETFVTKLKGLNKRGLRNKEEEDEEEPDYVDDDNMNNQQGGQQQQGGYQQQQQQQQQGGYQQQQPQQQQPKSGNLIDLDLSDLGGALPNNNNNNYGNNNNNNMYSPQPQQFNGNSNDLSFLGGGGGGGEVQAPVNKVVVFGGDRSQAIQISGAFTRFQGRINLELNLLNTSQQGMSKFKIQFYQNSFGISPADQILSCGAIEVGQSTDVTIPISCNGQISNPLNPVIDMAMMVLPSQERFYFKMNFPLLCLLTETGRLDRESYLSMWKSIPESNERSVEIQVRLPHVDVDSILRRLNSKNIFEIVRKKAPNQEISFLSCKTESSVYILIELAFNISTNTCRCSSKTTSPDIMALFEHNLNLLINNQI.

HEAT repeat units lie at residues 45-82, 117-154, 156-193, 273-313, 384-421, and 458-495; these read KDVS…NHPD, NITE…VNPE, VENQ…VSKK, DVIR…KRPE, RASE…KYPN, and DNAH…KRPK. A disordered region spans residues 590 to 700; sequence GLRNKEEEDE…NDLSFLGGGG (111 aa). The segment covering 596 to 609 has biased composition (acidic residues); it reads EEDEEEPDYVDDDN. Composition is skewed to low complexity over residues 613–645 and 664–677; these read QQGG…QQQP and NNNN…NNNN. Polar residues predominate over residues 678–693; sequence MYSPQPQQFNGNSNDL.

This sequence belongs to the adaptor complexes large subunit family. Adaptor protein complex 1 (AP-1) is a heterotetramer composed of two large adaptins (gamma-type subunit and beta-type subunit), a medium adaptin (mu-type subunit) and a small adaptin (sigma-type subunit).

Its subcellular location is the golgi apparatus. It is found in the trans-Golgi network. The protein localises to the cytoplasmic vesicle. It localises to the clathrin-coated vesicle membrane. Its function is as follows. Subunit of clathrin-associated adaptor protein complex 1 that plays a role in protein sorting in the trans-Golgi network (TGN) and endosomes. The AP complexes mediate the recruitment of clathrin to membranes and the recognition of sorting signals within the cytosolic tails of transmembrane cargo molecules. Also involved in early steps of phagocytosis and macropinocytosis. This Dictyostelium discoideum (Social amoeba) protein is AP-1 complex subunit beta (ap1b1).